The primary structure comprises 824 residues: Vesicle-fusing ATPase (824 aa).

ATP contacts are provided by residues 582–587 (RGMIVW) and 622–629 (AKTGKTSL). T627 is a binding site for Mg(2+).

It belongs to the AAA ATPase family. Homohexamer. Requires Mg(2+) as cofactor.

It is found in the cytoplasm. It catalyses the reaction ATP + H2O = ADP + phosphate + H(+). In terms of biological role, required for vesicle-mediated transport. Catalyzes the fusion of transport vesicles within the Golgi cisternae. Is also required for transport from the endoplasmic reticulum to the Golgi stack. Seems to function as a fusion protein required for the delivery of cargo proteins to all compartments of the Golgi stack independent of vesicle origin. This chain is Vesicle-fusing ATPase (nsf-1), found in Caenorhabditis elegans.